Consider the following 988-residue polypeptide: Voltage-gated delayed rectifier potassium channel KCNH5 (988 aa).

The Cytoplasmic portion of the chain corresponds to 1–217; sequence MPGGKRGLVA…LHYCAFKTTW (217 aa). Residues 14 to 86 form the PAS domain; it reads TFLENIVRRS…TIEKVRQTFD (73 aa). The 53-residue stretch at 91–143 folds into the PAC domain; that stretch reads NCFEVLLYKKNRTPVWFYMQIAPIRNEHEKVVLFLCTFKDITLFKQPIEDDST. The helical transmembrane segment at 218–238 threads the bilayer; sequence DWVILILTFYTAIMVPYNVSF. Residues 239–243 lie on the Extracellular side of the membrane; sequence KTKQN. A helical membrane pass occupies residues 244 to 264; the sequence is NIAWLVLDSVVDVIFLVDIVL. Residues 265–291 are Cytoplasmic-facing; sequence NFHTTFVGPGGEVISDPKLIRMNYLKT. Residues 292–312 form a helical membrane-spanning segment; it reads WFVIDLLSCLPYDIINAFENV. Over 313-319 the chain is Extracellular; that stretch reads DEGISSL. A helical; Voltage-sensor transmembrane segment spans residues 320 to 340; it reads FSSLKVVRLLRLGRVARKLDH. Topologically, residues 341–346 are cytoplasmic; sequence YLEYGA. Residues 347-367 form a helical membrane-spanning segment; the sequence is AVLVLLVCVFGLVAHWLACIW. Topologically, residues 368–419 are extracellular; it reads YSIGDYEVIDEVTNTIQIDSWLYQLALSIGTPYRYNTSAGIWEGGPSKDSLY. An N-linked (GlcNAc...) asparagine glycan is attached at Asn-403. An intramembrane region (pore-forming) is located at residues 420-440; that stretch reads VSSLYFTMTSLTTIGFGNIAP. The Selectivity filter motif lies at 432–437; sequence TIGFGN. The Extracellular segment spans residues 441-446; it reads TTDVEK. The chain crosses the membrane as a helical span at residues 447–467; it reads MFSVAMMMVGSLLYATIFGNV. At 468-988 the chain is on the cytoplasmic side; it reads TTIFQQMYAN…PESDKDEINF (521 aa). 550-668 lines the a nucleoside 3',5'-cyclic phosphate pocket; that stretch reads AFRLASDGCL…SFSRNLTLTC (119 aa). Residues 704–715 are calmodulin-binding; it reads HPVRKLFQKFKQ. Residues 721-741 are disordered; it reads IQGSAQSDPERSQLQVESRPL. Polar residues predominate over residues 723–741; the sequence is GSAQSDPERSQLQVESRPL. A Glycyl lysine isopeptide (Lys-Gly) (interchain with G-Cter in ubiquitin) cross-link involves residue Lys-785. Positions 838–893 are disordered; it reads GLLSEDPKGSDSENSVTKNPLRKTDSCDSGITKSDLRLDKAGEARSPLEHSPSQAD. Residues 871–885 show a composition bias toward basic and acidic residues; sequence SDLRLDKAGEARSPL. Position 883 is a phosphoserine (Ser-883). The tract at residues 909–948 is CAD (involved in subunit assembly); sequence TLQEVKHELKEDIQLLSCRMTALEKQVAEILKLLSEKSVP.

The protein belongs to the potassium channel family. H (Eag) (TC 1.A.1.20) subfamily. Kv10.2/KCNH5 sub-subfamily. As to quaternary structure, homotetramer. The potassium channel is probably composed of a homo- or heterotetrameric complex of pore-forming alpha subunits that can associate with modulating beta subunits. Heteromultimer with KCNH1/EAG.

It localises to the membrane. The catalysed reaction is K(+)(in) = K(+)(out). Its function is as follows. Pore-forming (alpha) subunit of a voltage-gated delayed rectifier potassium channel that mediates outward-rectifying potassium currents which, on depolarization, reaches a steady-state level and do not inactivate. The kinetic is characterized by a slow activation time course and a small voltage dependence of the activation time constants, therefore, starts to open at more negative voltages. The activation kinetics depend on the prepulse potential and external divalent cation concentration. The time course of activation is biphasic with a fast and a slowly activating current component. With negative prepulses, the current activation is delayed and slowed down several fold, whereas more positive prepulses speed up activation, therefore the activation rate depends on holding potential. The chain is Voltage-gated delayed rectifier potassium channel KCNH5 from Mus musculus (Mouse).